The chain runs to 310 residues: Olfactory receptor 2A7 (310 aa).

Residues Met-1–Met-24 lie on the Extracellular side of the membrane. Residue Asn-4 is glycosylated (N-linked (GlcNAc...) asparagine). A helical transmembrane segment spans residues Leu-25 to Val-45. Residues Gly-46–Arg-53 are Cytoplasmic-facing. A helical membrane pass occupies residues Leu-54–Cys-74. At Asn-75–Cys-96 the chain is on the extracellular side. An intrachain disulfide couples Cys-96 to Cys-178. A helical transmembrane segment spans residues Met-97–Met-117. Topologically, residues Ser-118 to Trp-148 are cytoplasmic. The chain crosses the membrane as a helical span at residues Ile-149–Val-169. Over Ser-170–Ser-204 the chain is Extracellular. Asn-194 carries N-linked (GlcNAc...) asparagine glycosylation. A helical membrane pass occupies residues Val-205–Leu-225. The Cytoplasmic segment spans residues Lys-226–Thr-239. A helical membrane pass occupies residues Cys-240–Gly-260. At Pro-261–Leu-273 the chain is on the extracellular side. Residues Leu-274–Leu-291 traverse the membrane as a helical segment. Residues Arg-292–Leu-310 are Cytoplasmic-facing.

It belongs to the G-protein coupled receptor 1 family. As to expression, olfactory epithelium.

It is found in the cell membrane. In terms of biological role, odorant receptor. The chain is Olfactory receptor 2A7 from Mus musculus (Mouse).